A 160-amino-acid polypeptide reads, in one-letter code: Cytochrome b6-f complex subunit 4 (160 aa).

Helical transmembrane passes span 36 to 56, 95 to 115, and 131 to 151; these read LLYV…GLAV, LLGV…PFIE, and LVFI…CLPI.

The protein belongs to the cytochrome b family. PetD subfamily. As to quaternary structure, the 4 large subunits of the cytochrome b6-f complex are cytochrome b6, subunit IV (17 kDa polypeptide, petD), cytochrome f and the Rieske protein, while the 4 small subunits are petG, petL, petM and petN. The complex functions as a dimer.

It localises to the plastid. The protein localises to the chloroplast thylakoid membrane. Component of the cytochrome b6-f complex, which mediates electron transfer between photosystem II (PSII) and photosystem I (PSI), cyclic electron flow around PSI, and state transitions. This is Cytochrome b6-f complex subunit 4 from Trieres chinensis (Marine centric diatom).